We begin with the raw amino-acid sequence, 199 residues long: Holliday junction branch migration complex subunit RuvA (199 aa).

The domain I stretch occupies residues 1–64; it reads MIARLTGMLA…EDAISLFGFR (64 aa). A domain II region spans residues 65–143; that stretch reads TVAEKEFFQV…KMDVAPSTKE (79 aa). The interval 144–154 is flexible linker; it reads AAPSEAPPEVA. A domain III region spans residues 154–199; that stretch reads ADDVASALVNLGYKEAVVRKVLAEMAIESGASTEAVLRQALKILMK.

It belongs to the RuvA family. As to quaternary structure, homotetramer. Forms an RuvA(8)-RuvB(12)-Holliday junction (HJ) complex. HJ DNA is sandwiched between 2 RuvA tetramers; dsDNA enters through RuvA and exits via RuvB. An RuvB hexamer assembles on each DNA strand where it exits the tetramer. Each RuvB hexamer is contacted by two RuvA subunits (via domain III) on 2 adjacent RuvB subunits; this complex drives branch migration. In the full resolvosome a probable DNA-RuvA(4)-RuvB(12)-RuvC(2) complex forms which resolves the HJ.

It localises to the cytoplasm. Its function is as follows. The RuvA-RuvB-RuvC complex processes Holliday junction (HJ) DNA during genetic recombination and DNA repair, while the RuvA-RuvB complex plays an important role in the rescue of blocked DNA replication forks via replication fork reversal (RFR). RuvA specifically binds to HJ cruciform DNA, conferring on it an open structure. The RuvB hexamer acts as an ATP-dependent pump, pulling dsDNA into and through the RuvAB complex. HJ branch migration allows RuvC to scan DNA until it finds its consensus sequence, where it cleaves and resolves the cruciform DNA. The sequence is that of Holliday junction branch migration complex subunit RuvA from Geobacter metallireducens (strain ATCC 53774 / DSM 7210 / GS-15).